Here is a 1325-residue protein sequence, read N- to C-terminus: RIMS-binding protein 2 (1325 aa).

The disordered stretch occupies residues 153-181 (TFLSKSRSDTPRCRFDSDMDNDQNSNTSK). The span at 158–169 (SRSDTPRCRFDS) shows a compositional bias: basic and acidic residues. Positions 186 to 253 (GKVHLCIARY…PSNFVDFVQD (68 aa)) constitute an SH3 1 domain. 3 consecutive Fibronectin type-III domains span residues 315–408 (VPYP…GKDV), 411–493 (APSN…KKEA), and 507–608 (PPQD…VPPS). 3 disordered regions span residues 601-778 (SDLL…GSDL), 988-1010 (DLGS…KKYE), and 1040-1090 (AAGP…SRPM). The span at 627–641 (ETKEEHLGPHLKIDE) shows a compositional bias: basic and acidic residues. A compositionally biased stretch (polar residues) spans 664 to 676 (FPSSLQGRRSPSP). Residues 696 to 716 (MAREAAQRVAESNRMERRSVF) show a composition bias toward basic and acidic residues. The span at 717–727 (SERSNAAQYAN) shows a compositional bias: polar residues. Basic and acidic residues-rich tracts occupy residues 763–774 (CHGEDYHTESSR) and 996–1010 (PRSE…KKYE). SH3 domains are found at residues 1121–1189 (ISTR…EIQA) and 1225–1292 (VSTR…EVPD).

The protein belongs to the RIMBP family. Interacts with RIMS1, RIMS2, CACNA1D and CACNA1B, and potentially with other Ca(2+) channel alpha-1 isoforms. In terms of tissue distribution, brain, cochlea and retina.

The protein localises to the cell membrane. The protein resides in the synapse. Plays a role in the synaptic transmission as bifunctional linker that interacts simultaneously with RIMS1, RIMS2, CACNA1D and CACNA1B. This chain is RIMS-binding protein 2 (RIMBP2), found in Gallus gallus (Chicken).